The sequence spans 31 residues: Cytochrome b6-f complex subunit 6 (31 aa).

Residues 4-24 (IISYFGFLFGALTLALILFIG) form a helical membrane-spanning segment.

Belongs to the PetL family. As to quaternary structure, the 4 large subunits of the cytochrome b6-f complex are cytochrome b6, subunit IV (17 kDa polypeptide, PetD), cytochrome f and the Rieske protein, while the 4 small subunits are PetG, PetL, PetM and PetN. The complex functions as a dimer.

It is found in the plastid. The protein resides in the chloroplast thylakoid membrane. Its function is as follows. Component of the cytochrome b6-f complex, which mediates electron transfer between photosystem II (PSII) and photosystem I (PSI), cyclic electron flow around PSI, and state transitions. PetL is important for photoautotrophic growth as well as for electron transfer efficiency and stability of the cytochrome b6-f complex. In Physcomitrium patens (Spreading-leaved earth moss), this protein is Cytochrome b6-f complex subunit 6.